A 211-amino-acid polypeptide reads, in one-letter code: ATP phosphoribosyltransferase (211 aa).

Belongs to the ATP phosphoribosyltransferase family. Short subfamily. In terms of assembly, heteromultimer composed of HisG and HisZ subunits.

The protein resides in the cytoplasm. It catalyses the reaction 1-(5-phospho-beta-D-ribosyl)-ATP + diphosphate = 5-phospho-alpha-D-ribose 1-diphosphate + ATP. The protein operates within amino-acid biosynthesis; L-histidine biosynthesis; L-histidine from 5-phospho-alpha-D-ribose 1-diphosphate: step 1/9. Catalyzes the condensation of ATP and 5-phosphoribose 1-diphosphate to form N'-(5'-phosphoribosyl)-ATP (PR-ATP). Has a crucial role in the pathway because the rate of histidine biosynthesis seems to be controlled primarily by regulation of HisG enzymatic activity. This is ATP phosphoribosyltransferase from Pseudomonas putida (strain ATCC 47054 / DSM 6125 / CFBP 8728 / NCIMB 11950 / KT2440).